The chain runs to 549 residues: Glucose-6-phosphate isomerase (549 aa).

The Proton donor role is filled by glutamate 355. Active-site residues include histidine 386 and lysine 514.

The protein belongs to the GPI family.

It is found in the cytoplasm. It carries out the reaction alpha-D-glucose 6-phosphate = beta-D-fructose 6-phosphate. Its pathway is carbohydrate biosynthesis; gluconeogenesis. It functions in the pathway carbohydrate degradation; glycolysis; D-glyceraldehyde 3-phosphate and glycerone phosphate from D-glucose: step 2/4. Its function is as follows. Catalyzes the reversible isomerization of glucose-6-phosphate to fructose-6-phosphate. The protein is Glucose-6-phosphate isomerase of Salmonella schwarzengrund (strain CVM19633).